Reading from the N-terminus, the 338-residue chain is MDLDWLMKCKCKKMLKRLTVKVSGYVVAKITKKGSEETKLKPLVMGKHNQILNLQSLLNAFVGNSSGVTTSSYGEGITLLGANGESVAELAFLTVTPQPTAGGGEVIFTGLDISNSAYTTTQQVLTTESSGYDIEIATADLSFTKNSDEQLYMTWVISFTVTSNPDNVTIVPSLNMSFTVPPNGYYSAPSLCQYTPDNGNLKAQSATGQSSPTTSNPSGYELTTLVTSLLFTWLIYSSSPGASLEYLAFVGTNSLALAVETNTMGSVSGVQYTATTIGPNNFVTGNYIFVESSNNWTVYTRVSPNANDSTISPVFVNAVYSGLFSECTFQGIVIQFTT.

This is an uncharacterized protein from Acidianus filamentous virus 2 (isolate Italy/Pozzuoli) (AFV-2).